Consider the following 323-residue polypeptide: Elongation factor P--(R)-beta-lysine ligase (323 aa).

Residue 76-78 (SPE) coordinates substrate. ATP is bound by residues 100–102 (RNE) and asparagine 109. Tyrosine 118 contributes to the substrate binding site. 242–243 (EL) serves as a coordination point for ATP. Glutamate 249 is a binding site for substrate. An ATP-binding site is contributed by glycine 298.

It belongs to the class-II aminoacyl-tRNA synthetase family. EpmA subfamily. As to quaternary structure, homodimer.

The enzyme catalyses D-beta-lysine + L-lysyl-[protein] + ATP = N(6)-((3R)-3,6-diaminohexanoyl)-L-lysyl-[protein] + AMP + diphosphate + H(+). In terms of biological role, with EpmB is involved in the beta-lysylation step of the post-translational modification of translation elongation factor P (EF-P). Catalyzes the ATP-dependent activation of (R)-beta-lysine produced by EpmB, forming a lysyl-adenylate, from which the beta-lysyl moiety is then transferred to the epsilon-amino group of a conserved specific lysine residue in EF-P. The chain is Elongation factor P--(R)-beta-lysine ligase from Actinobacillus succinogenes (strain ATCC 55618 / DSM 22257 / CCUG 43843 / 130Z).